Consider the following 259-residue polypeptide: tRNA-cytidine(32) 2-sulfurtransferase (259 aa).

A PP-loop motif motif is present at residues 37–42 (SGGKDS). [4Fe-4S] cluster contacts are provided by C112, C115, and C202.

It belongs to the TtcA family. Homodimer. The cofactor is Mg(2+). [4Fe-4S] cluster serves as cofactor.

The protein localises to the cytoplasm. The enzyme catalyses cytidine(32) in tRNA + S-sulfanyl-L-cysteinyl-[cysteine desulfurase] + AH2 + ATP = 2-thiocytidine(32) in tRNA + L-cysteinyl-[cysteine desulfurase] + A + AMP + diphosphate + H(+). It functions in the pathway tRNA modification. In terms of biological role, catalyzes the ATP-dependent 2-thiolation of cytidine in position 32 of tRNA, to form 2-thiocytidine (s(2)C32). The sulfur atoms are provided by the cysteine/cysteine desulfurase (IscS) system. The sequence is that of tRNA-cytidine(32) 2-sulfurtransferase from Syntrophotalea carbinolica (strain DSM 2380 / NBRC 103641 / GraBd1) (Pelobacter carbinolicus).